The sequence spans 90 residues: Acylphosphatase (90 aa).

Residues 3–90 (QKLFIVTGHV…EQFEHFEIRR (88 aa)) enclose the Acylphosphatase-like domain. Residues Arg18 and Asn36 contribute to the active site.

Belongs to the acylphosphatase family.

The catalysed reaction is an acyl phosphate + H2O = a carboxylate + phosphate + H(+). The polypeptide is Acylphosphatase (acyP) (Actinobacillus pleuropneumoniae serotype 5b (strain L20)).